We begin with the raw amino-acid sequence, 116 residues long: MRKTFRIKKPEEFQHVFNKHRSVANKYFIVYQMDKPEQKHFRVGLSVSKKVGKAHERVWVKRRIRQSLLELKPELPQELDLLVIARPAAAHRSQKFLKNQMIHVLKLAKILKEENE.

Belongs to the RnpA family. Consists of a catalytic RNA component (M1 or rnpB) and a protein subunit.

The catalysed reaction is Endonucleolytic cleavage of RNA, removing 5'-extranucleotides from tRNA precursor.. Its function is as follows. RNaseP catalyzes the removal of the 5'-leader sequence from pre-tRNA to produce the mature 5'-terminus. It can also cleave other RNA substrates such as 4.5S RNA. The protein component plays an auxiliary but essential role in vivo by binding to the 5'-leader sequence and broadening the substrate specificity of the ribozyme. The chain is Ribonuclease P protein component from Leuconostoc mesenteroides subsp. mesenteroides (strain ATCC 8293 / DSM 20343 / BCRC 11652 / CCM 1803 / JCM 6124 / NCDO 523 / NBRC 100496 / NCIMB 8023 / NCTC 12954 / NRRL B-1118 / 37Y).